We begin with the raw amino-acid sequence, 527 residues long: F-box-like/WD repeat-containing protein TBL1X (527 aa).

N-acetylserine is present on S2. One can recognise a LisH domain in the interval 4–36 (TSDEVNFLVYRYLQESGFSHSAFTFGIESHISQ). Residues 41 to 86 (GTLVPPAALISILQKGLQYVEAEISINEDGTVFDGRPIESLSLIDA) enclose the F-box-like domain. K102 is subject to N6-acetyllysine. The segment at 127–164 (TTPAAAAQQNPPKNGEATVNGEENGAHAINNHSKPMEI) is disordered. WD repeat units lie at residues 180–219 (GHES…NGGS), 236–275 (PSNK…ASTL), 277–316 (QHKG…AKQQ), 319–359 (FHSA…KTFQ), 360–399 (GHTN…CVHD), 402–450 (AHSK…CIHT), 453–492 (KHQE…LVHS), and 494–526 (RGTG…LDLR). A Glycyl lysine isopeptide (Lys-Gly) (interchain with G-Cter in SUMO2) cross-link involves residue K290.

Belongs to the WD repeat EBI family. Homotetramer; dimer of dimers. Component of the N-Cor repressor complex, at least composed of NCOR1, NCOR2, HDAC3, TBL1X, TBL1R, CORO2A and GPS2. Component of a E3 ubiquitin ligase complex containing UBE2D1, SIAH1, CACYBP/SIP, SKP1, APC and TBL1X. Interacts with GPS2 (when sumoylated); leading to protect GPS2 against degradation by the proteasome. Probably part of other corepressor complexes, that do not contain NCOR1 and NCOR2. Interacts with histones H2B, H3a and H4. Interacts with MECP2; recruits TBL1X to the heterochromatin foci. Interacts with USP44. As to expression, expressed in the cochlea.

It localises to the nucleus. Functionally, F-box-like protein involved in the recruitment of the ubiquitin/19S proteasome complex to nuclear receptor-regulated transcription units. Plays an essential role in transcription activation mediated by nuclear receptors. Probably acts as integral component of corepressor complexes that mediates the recruitment of the 19S proteasome complex, leading to the subsequent proteasomal degradation of transcription repressor complexes, thereby allowing cofactor exchange. This Mus musculus (Mouse) protein is F-box-like/WD repeat-containing protein TBL1X (Tbl1x).